Reading from the N-terminus, the 44-residue chain is MVHYEVVQYLMDCCGITYNQAVQALRSNDWDLWQAEVAIRSNKM.

This is an uncharacterized protein from Escherichia coli (strain K12).